Reading from the N-terminus, the 252-residue chain is Clc-like protein 2 (252 aa).

The next 4 helical transmembrane spans lie at 7–29, 91–111, 127–147, and 173–193; these read YAIL…TPAW, LFHI…SFCV, VFLV…AVYS, and IALT…VHVL.

This sequence belongs to the Clc family.

The protein localises to the membrane. This Caenorhabditis elegans protein is Clc-like protein 2 (clc-2).